We begin with the raw amino-acid sequence, 744 residues long: Tripartite motif-containing protein 2 (744 aa).

Residue Ser10 is modified to Phosphoserine. The RING-type zinc-finger motif lies at 23 to 64 (CSICLERYKNPKVLPCLHTFCERCLQNYIPAHSLTLSCPVCR). The B box-type zinc finger occupies 113–154 (GKPLSCPNHDGNVMEFYCQSCETAMCRECTEGEHAEHPTVPL). Zn(2+) is bound by residues Cys118, His121, Cys141, and His146. A Filamin repeat occupies 320–421 (TTNAVASETV…IRGSPFKLKV (102 aa)). Thr371 carries the post-translational modification Phosphothreonine. Ser375, Ser424, and Ser428 each carry phosphoserine. Residues 432 to 462 (EGVKRRVKSPGSGHVKQKAVKRPASMYSTGK) form a disordered region. NHL repeat units lie at residues 473–516 (IFRV…FSND), 520–563 (KSRF…FSND), 564–605 (GKFK…FQPN), 609–652 (VTRF…FNQE), 656–699 (MLKF…FDGS), and 700–743 (GSFL…YRYL).

The protein belongs to the TRIM/RBCC family. As to quaternary structure, forms homooligomers. Interacts with TRIM3; this interaction reduces TRIM2 activity. Interacts with myosin V; myosin V may not be a substrate for ubiquitination. Interacts with NEFL. Interacts with phosphorylated BCL2L11. Interacts with SIRPA. Post-translationally, RING-type zinc finger-dependent and UBE2D1-dependent autoubiquitination. Highly expressed in the cerebellum, hippocampus, retina and spinal cord. In the cerebellum, strongest expression in Purkinje cells and in the deep cerebellar nuclei. In retina, high expression in the ganglionic cell layer, inner nuclear layer and inthe outer plexiform layer. Particularly high expression in the hippocampus, in pyramidal cells of CA1-CA3 hippocampal areas and ingranule cells of the dentate gyrus.

It localises to the cytoplasm. The catalysed reaction is S-ubiquitinyl-[E2 ubiquitin-conjugating enzyme]-L-cysteine + [acceptor protein]-L-lysine = [E2 ubiquitin-conjugating enzyme]-L-cysteine + N(6)-ubiquitinyl-[acceptor protein]-L-lysine.. It participates in protein modification; protein ubiquitination. UBE2D1-dependent E3 ubiquitin-protein ligase that mediates the ubiquitination of NEFL and of phosphorylated BCL2L11. Plays a neuroprotective function. May play a role in neuronal rapid ischemic tolerance. Plays a role in antiviral immunity and limits new world arenavirus infection independently of its ubiquitin ligase activity by decreasing virus internalization. The protein is Tripartite motif-containing protein 2 (Trim2) of Mus musculus (Mouse).